We begin with the raw amino-acid sequence, 122 residues long: Large ribosomal subunit protein bL12 (122 aa).

This sequence belongs to the bacterial ribosomal protein bL12 family. As to quaternary structure, homodimer. Part of the ribosomal stalk of the 50S ribosomal subunit. Forms a multimeric L10(L12)X complex, where L10 forms an elongated spine to which 2 to 4 L12 dimers bind in a sequential fashion. Binds GTP-bound translation factors.

Its function is as follows. Forms part of the ribosomal stalk which helps the ribosome interact with GTP-bound translation factors. Is thus essential for accurate translation. This chain is Large ribosomal subunit protein bL12, found in Histophilus somni (strain 129Pt) (Haemophilus somnus).